The chain runs to 503 residues: Legumin J (503 aa).

The N-terminal stretch at 1–22 (MSKPFLSLLSLSLLLFASACLA) is a signal peptide. 2 cysteine pairs are disulfide-bonded: cysteine 33–cysteine 66 and cysteine 109–cysteine 329. In terms of domain architecture, Cupin type-1 1 spans 38 to 257 (INALEPDHRV…TFNTEEDTAK (220 aa)). Disordered stretches follow at residues 111 to 140 (ETYE…RRFR), 185 to 235 (FYLG…EGNS), and 253 to 323 (EDTA…RKNG). A compositionally biased stretch (low complexity) spans 118–129 (SSQSRQESRQQQ). Composition is skewed to basic and acidic residues over residues 254-268 (DTAK…ERSQ) and 282-300 (KGKE…HREE). Positions 301–312 (KEEEEEEEEDEE) are enriched in acidic residues. Residues 313–323 (EKQRSEERKNG) show a composition bias toward basic and acidic residues. A Cupin type-1 2 domain is found at 335-482 (ENIADAARAD…AFGLRQRQVT (148 aa)).

This sequence belongs to the 11S seed storage protein (globulins) family. Hexamer; each subunit is composed of an acidic and a basic chain derived from a single precursor and linked by a disulfide bond.

Functionally, this protein found in the seeds of many leguminous and non-leguminous plants is the source of sulfur-containing amino acids in seed meals. This Pisum sativum (Garden pea) protein is Legumin J (LEGJ).